The primary structure comprises 417 residues: Queuine tRNA-ribosyltransferase accessory subunit 2 (417 aa).

Residues Cys-324, Cys-326, Cys-329, and His-355 each contribute to the Zn(2+) site.

The protein belongs to the queuine tRNA-ribosyltransferase family. QTRT2 subfamily. In terms of assembly, heterodimer of a catalytic subunit and an accessory subunit. It depends on Zn(2+) as a cofactor.

It localises to the cytoplasm. Functionally, non-catalytic subunit of the queuine tRNA-ribosyltransferase (TGT) that catalyzes the base-exchange of a guanine (G) residue with queuine (Q) at position 34 (anticodon wobble position) in tRNAs with GU(N) anticodons (tRNA-Asp, -Asn, -His and -Tyr), resulting in the hypermodified nucleoside queuosine (7-(((4,5-cis-dihydroxy-2-cyclopenten-1-yl)amino)methyl)-7-deazaguanosine). The sequence is that of Queuine tRNA-ribosyltransferase accessory subunit 2 from Drosophila pseudoobscura pseudoobscura (Fruit fly).